A 327-amino-acid chain; its full sequence is WRKY transcription factor WRKY76 (327 aa).

Positions 56-76 form a coiled coil; that stretch reads AKILEAKVTQMSEENRRLTEV. Residues 88–134 are disordered; it reads LGLDGSASPPRPVSPLSGKKRSRESMETANSCDANSNRHQGGDADHA. The Nuclear localization signal signature appears at 106 to 112; the sequence is KKRSRES. The span at 114–126 shows a compositional bias: polar residues; sequence ETANSCDANSNRH. The WRKY DNA-binding region spans 160 to 226; the sequence is DTSLVVKDGY…YEGEHNHPHP (67 aa).

This sequence belongs to the WRKY group II-a family.

Its subcellular location is the nucleus. In terms of biological role, transcription repressor. Interacts specifically with the W box (5'-(T)TGAC[CT]-3'), a frequently occurring elicitor-responsive cis-acting element. Regulates, probably indirectly, the activation of defense-related genes during defense response. Modulates plant innate immunity against X.oryzae pv. oryzae (Xoo). The polypeptide is WRKY transcription factor WRKY76 (Oryza sativa subsp. indica (Rice)).